Here is a 103-residue protein sequence, read N- to C-terminus: Co-chaperonin GroES (103 aa).

This sequence belongs to the GroES chaperonin family. As to quaternary structure, heptamer of 7 subunits arranged in a ring. Interacts with the chaperonin GroEL.

Its subcellular location is the plastid. The protein resides in the cyanelle. In terms of biological role, together with the chaperonin GroEL, plays an essential role in assisting protein folding. The GroEL-GroES system forms a nano-cage that allows encapsulation of the non-native substrate proteins and provides a physical environment optimized to promote and accelerate protein folding. GroES binds to the apical surface of the GroEL ring, thereby capping the opening of the GroEL channel. The polypeptide is Co-chaperonin GroES (Cyanophora paradoxa).